Reading from the N-terminus, the 520-residue chain is Cytochrome P450 monooxygenase oblB (520 aa).

A run of 3 helical transmembrane segments spans residues 17–37 (VAVI…RLFL), 229–249 (LFMG…SILA), and 320–340 (IGTG…HIVV). Cys-462 is a heme binding site.

This sequence belongs to the cytochrome P450 family. It depends on heme as a cofactor.

It is found in the membrane. The protein operates within secondary metabolite biosynthesis; terpenoid biosynthesis. In terms of biological role, cytochrome P450 monooxygenase; part of the gene cluster that mediates the biosynthesis of the sesterterpenes ophiobolins, fungal phytotoxins with potential anti-cancer activities. The first step of the pathway is performed by the sesterterpene synthase oblA that possesses both prenyl transferase and terpene cyclase activity, converting isopentenyl diphosphate and dimethylallyl diphosphate into geranylfarnesyl diphosphate (GFPP) and further converting GFPP into ophiobolin F, respectively. Other sesterterpenoids (C(25) terpenoids) are found as minor products of oblA. It is expected that ophiobolin F is then oxidized to ophiobolin A via ophiobolin C and ophiobolin B intermediates by the combined action of the cytochrome P450 monooxygenase oblB and the FAD-dependent oxidoreductase oblC. Although oblB catalyzes multistep oxygenations at C5 and C21/C7 in a relatively efficient manner, it is unable to convert ophiobolin F to ophiobolin C and produces instead several unexpected derivatives. The protein is Cytochrome P450 monooxygenase oblB of Aspergillus clavatus (strain ATCC 1007 / CBS 513.65 / DSM 816 / NCTC 3887 / NRRL 1 / QM 1276 / 107).